The following is a 547-amino-acid chain: TBCC domain-containing protein 1 (547 aa).

In terms of domain architecture, C-CAP/cofactor C-like spans 304-435; that stretch reads PHTHRMVVMS…LEDHMAQTGL (132 aa).

Belongs to the TBCC family.

It is found in the cytoplasm. The protein resides in the cytoskeleton. The protein localises to the microtubule organizing center. It localises to the centrosome. Its subcellular location is the spindle pole. May play a role in the regulation of centrosome and Golgi apparatus positioning. This is TBCC domain-containing protein 1 (tbccd1) from Xenopus laevis (African clawed frog).